The chain runs to 363 residues: MSVDSFTSRLAVVMTAVVLVWWAQALPVPSPRRGESDCDAACRKFLLQYGYLDLGEENCTEVDSNRKLCSVDDELVGVPRPLARVDLAAGVSHLQTMAGLEPTGRIDASTARLFTSPRCGVPDVSKYIVAAGRRRRTRRESVIVCTTRWTTTKSNSNETLVKWWLDQSSMQWLNSTLNWVSLTNVLHHSFWKWSKESMLAFQQVSLERDAQIVVRFENGSHGDGWDFDGPGNVLAHAFQPGQSLGGDIHLDAAEPWTIYDIDGHDGNSILHVVLHEIGHALGLEHSRDPTSIMYAWYTPFKYDLGPEDVSAVAGLYGAKPASSVAAWNPKIQKFYWDRHVRNDLLPLLERDLDAEEEDSDEVR.

An N-terminal signal peptide occupies residues 1-25; that stretch reads MSVDSFTSRLAVVMTAVVLVWWAQA. Positions 26–126 are cleaved as a propeptide — activation peptide; it reads LPVPSPRRGE…PRCGVPDVSK (101 aa). The Cysteine switch signature appears at 117–124; the sequence is PRCGVPDV. The Zn(2+) site is built by Cys-119 and His-275. Glu-276 is an active-site residue. Zn(2+)-binding residues include His-279 and His-285.

Belongs to the peptidase M10A family. Zn(2+) serves as cofactor.

Its subcellular location is the secreted. In terms of biological role, probable endopeptidase. This chain is Probable matrix metalloproteinase 095L, found in Aedes vexans (Inland floodwater mosquito).